The primary structure comprises 590 residues: Arginine--tRNA ligase (590 aa).

A 'HIGH' region motif is present at residues 126–136; the sequence is PNVAKEMHVGH.

It belongs to the class-I aminoacyl-tRNA synthetase family. Monomer.

The protein localises to the cytoplasm. The enzyme catalyses tRNA(Arg) + L-arginine + ATP = L-arginyl-tRNA(Arg) + AMP + diphosphate. The polypeptide is Arginine--tRNA ligase (Streptomyces avermitilis (strain ATCC 31267 / DSM 46492 / JCM 5070 / NBRC 14893 / NCIMB 12804 / NRRL 8165 / MA-4680)).